The sequence spans 432 residues: Trigger factor (432 aa).

One can recognise a PPIase FKBP-type domain in the interval 161–246; it reads EDRVTIDFTG…LKKVEERELP (86 aa).

Belongs to the FKBP-type PPIase family. Tig subfamily.

The protein localises to the cytoplasm. The catalysed reaction is [protein]-peptidylproline (omega=180) = [protein]-peptidylproline (omega=0). In terms of biological role, involved in protein export. Acts as a chaperone by maintaining the newly synthesized protein in an open conformation. Functions as a peptidyl-prolyl cis-trans isomerase. The polypeptide is Trigger factor (Salmonella schwarzengrund (strain CVM19633)).